The sequence spans 293 residues: Transcription elongation factor S-II (293 aa).

The TFIIS N-terminal domain maps to 4–81; the sequence is ADIRSAKAAL…KKWKADVSKG (78 aa). Positions 81–123 are disordered; the sequence is GRPLKTTTTTSSTPSKHADVGSQAQKQVQKQSSSGQRTFKSDN. Positions 100–116 are enriched in low complexity; it reads VGSQAQKQVQKQSSSGQ. The region spanning 133 to 248 is the TFIIS central domain; the sequence is IRNNCIGLMY…HAQGAKPQKA (116 aa). Residues 251–291 form a TFIIS-type zinc finger; sequence DLFTCGKCKQKKVSYYQMQTRSADEPMTTFCECTVCGNRWK. The Zn(2+) site is built by cysteine 255, cysteine 258, cysteine 283, and cysteine 286.

The protein belongs to the TFS-II family.

It is found in the nucleus. Functionally, necessary for efficient RNA polymerase II transcription elongation past template-encoded arresting sites. The arresting sites in DNA have the property of trapping a certain fraction of elongating RNA polymerases that pass through, resulting in locked ternary complexes. Cleavage of the nascent transcript by S-II allows the resumption of elongation from the new 3'-terminus. The protein is Transcription elongation factor S-II (tfs1) of Schizosaccharomyces pombe (strain 972 / ATCC 24843) (Fission yeast).